Consider the following 130-residue polypeptide: Fluoride-specific ion channel FluC (130 aa).

4 helical membrane-spanning segments follow: residues 3-23 (FIFL…YFVG), 39-59 (GTFS…HLAV), 67-87 (FGIF…SYGL), and 102-122 (VSYA…GWFL). Na(+) contacts are provided by G77 and T80.

Belongs to the fluoride channel Fluc/FEX (TC 1.A.43) family.

The protein localises to the cell inner membrane. It catalyses the reaction fluoride(in) = fluoride(out). Na(+) is not transported, but it plays an essential structural role and its presence is essential for fluoride channel function. Fluoride-specific ion channel. Important for reducing fluoride concentration in the cell, thus reducing its toxicity. The protein is Fluoride-specific ion channel FluC of Helicobacter pylori (strain Shi470).